A 295-amino-acid chain; its full sequence is ATP synthase gamma chain (295 aa).

This sequence belongs to the ATPase gamma chain family. F-type ATPases have 2 components, CF(1) - the catalytic core - and CF(0) - the membrane proton channel. CF(1) has five subunits: alpha(3), beta(3), gamma(1), delta(1), epsilon(1). CF(0) has three main subunits: a, b and c.

The protein resides in the cell inner membrane. Produces ATP from ADP in the presence of a proton gradient across the membrane. The gamma chain is believed to be important in regulating ATPase activity and the flow of protons through the CF(0) complex. This chain is ATP synthase gamma chain, found in Campylobacter curvus (strain 525.92).